The chain runs to 531 residues: MSVTAESPSLRGGSILENKQELIDLKNIGEHARTVQPFKTSKHQPLIQGSVSKEAAIATHSALHFDLTPEKEKKIRDMYDRLDADNDGSIDIRDLTQALSLQAHIPASVAPKLLERMKSEHSDRVTYADFTNYVIAHEARLAEVFDKIDLNSDGEVDMAEIKSYCKEMGVNLDDQKAMSIVKKMDQSGSSSVNLNEFQDFMLLYPSTDMRDMVDFWRHNLIIDIGEDGQVPEDFTPQELLSGVWWRHLVAGGVAGAMSRTCTAPFDRIKVYLQVNSTKTNKLGVVSCVHLLHAEGGIKSFWRGNGINVIKIAPESAMKFMCYDQIKRWMQEYKGGAELSTIERLLAGSSAGAISQTAIYPMEVMKTRLALRRTGQLDKGMFHFAHKMYTKEGIKCFYKGYLPNLLGIIPYAGIDLTVYESLKSMYTKYYTEHTEPGVLALLACGTCSSTCGQLASYPLALVRTRLQARAISPKNSTQPDTMVGQFKHILQTEGFTGLYRGITPNFMKVIPAVSISYVVYEKVRKQLGATMT.

EF-hand domains are found at residues 70-105 (EKEK…QAHI), 106-135 (PASV…NYVI), 136-171 (AHEA…MGVN), and 172-207 (LDDQ…YPST). Ca(2+) contacts are provided by Asp-83, Asp-85, Asp-87, Ser-89, and Asp-94. 5 residues coordinate Ca(2+): Asp-149, Asn-151, Asp-153, Glu-155, and Glu-160. Solcar repeat units follow at residues 242-328 (GVWW…IKRW), 338-424 (LSTI…LKSM), and 435-525 (PGVL…VRKQ). 6 helical membrane-spanning segments follow: residues 248-265 (LVAG…TAPF), 303-322 (GNGI…FMCY), 348-361 (SSAG…IYPM), 399-418 (GYLP…LTVY), 441-458 (LACG…SYPL), and 500-517 (GITP…ISYV).

The protein belongs to the mitochondrial carrier (TC 2.A.29) family.

It localises to the mitochondrion inner membrane. Functionally, calcium-dependent mitochondrial solute carrier. This is Probable calcium-binding mitochondrial carrier F17E5.2 from Caenorhabditis elegans.